Reading from the N-terminus, the 471-residue chain is Glutamyl-tRNA(Gln) amidotransferase subunit A (471 aa).

Active-site charge relay system residues include Lys-66 and Ser-141. Ser-165 (acyl-ester intermediate) is an active-site residue.

This sequence belongs to the amidase family. GatA subfamily. Heterotrimer of A, B and C subunits.

The enzyme catalyses L-glutamyl-tRNA(Gln) + L-glutamine + ATP + H2O = L-glutaminyl-tRNA(Gln) + L-glutamate + ADP + phosphate + H(+). In terms of biological role, allows the formation of correctly charged Gln-tRNA(Gln) through the transamidation of misacylated Glu-tRNA(Gln) in organisms which lack glutaminyl-tRNA synthetase. The reaction takes place in the presence of glutamine and ATP through an activated gamma-phospho-Glu-tRNA(Gln). The chain is Glutamyl-tRNA(Gln) amidotransferase subunit A from Thermus thermophilus (strain ATCC BAA-163 / DSM 7039 / HB27).